The chain runs to 295 residues: Ribosomal protein L11 methyltransferase (295 aa).

S-adenosyl-L-methionine-binding residues include Thr138, Gly161, Asp183, and Asn230.

Belongs to the methyltransferase superfamily. PrmA family.

Its subcellular location is the cytoplasm. It catalyses the reaction L-lysyl-[protein] + 3 S-adenosyl-L-methionine = N(6),N(6),N(6)-trimethyl-L-lysyl-[protein] + 3 S-adenosyl-L-homocysteine + 3 H(+). Its function is as follows. Methylates ribosomal protein L11. In Rhodopseudomonas palustris (strain BisB5), this protein is Ribosomal protein L11 methyltransferase.